Here is a 488-residue protein sequence, read N- to C-terminus: Acetyl-coenzyme A carboxylase carboxyl transferase subunit beta, chloroplastic (488 aa).

Positions 189-211 (ISGSDSGSSNIRTDGNGSDIRGR) are disordered. In terms of domain architecture, CoA carboxyltransferase N-terminal spans 224-488 (LWVQCENCYG…LHGFFPLTQN (265 aa)). Positions 228, 231, 247, and 250 each coordinate Zn(2+). Residues 228–250 (CENCYGLNYKKFFKSKMNICEQC) form a C4-type zinc finger.

Belongs to the AccD/PCCB family. As to quaternary structure, acetyl-CoA carboxylase is a heterohexamer composed of biotin carboxyl carrier protein, biotin carboxylase and 2 subunits each of ACCase subunit alpha and ACCase plastid-coded subunit beta (accD). Requires Zn(2+) as cofactor.

The protein localises to the plastid. It localises to the chloroplast stroma. The catalysed reaction is N(6)-carboxybiotinyl-L-lysyl-[protein] + acetyl-CoA = N(6)-biotinyl-L-lysyl-[protein] + malonyl-CoA. Its pathway is lipid metabolism; malonyl-CoA biosynthesis; malonyl-CoA from acetyl-CoA: step 1/1. In terms of biological role, component of the acetyl coenzyme A carboxylase (ACC) complex. Biotin carboxylase (BC) catalyzes the carboxylation of biotin on its carrier protein (BCCP) and then the CO(2) group is transferred by the transcarboxylase to acetyl-CoA to form malonyl-CoA. The chain is Acetyl-coenzyme A carboxylase carboxyl transferase subunit beta, chloroplastic from Liriodendron tulipifera (Tuliptree).